Consider the following 357-residue polypeptide: Biotin synthase (357 aa).

A disordered region spans residues 1–27 (MTTAETKPATETGENAGTTGTAGTAAT). Residues 9–27 (ATETGENAGTTGTAGTAAT) show a composition bias toward low complexity. The region spanning 78–303 (DAVEMEGIIS…RQLLRFAGGR (226 aa)) is the Radical SAM core domain. Residues Cys93, Cys97, and Cys100 each coordinate [4Fe-4S] cluster. 3 residues coordinate [2Fe-2S] cluster: Cys136, Cys228, and Arg298.

Belongs to the radical SAM superfamily. Biotin synthase family. As to quaternary structure, homodimer. It depends on [4Fe-4S] cluster as a cofactor. [2Fe-2S] cluster serves as cofactor.

It carries out the reaction (4R,5S)-dethiobiotin + (sulfur carrier)-SH + 2 reduced [2Fe-2S]-[ferredoxin] + 2 S-adenosyl-L-methionine = (sulfur carrier)-H + biotin + 2 5'-deoxyadenosine + 2 L-methionine + 2 oxidized [2Fe-2S]-[ferredoxin]. It participates in cofactor biosynthesis; biotin biosynthesis; biotin from 7,8-diaminononanoate: step 2/2. In terms of biological role, catalyzes the conversion of dethiobiotin (DTB) to biotin by the insertion of a sulfur atom into dethiobiotin via a radical-based mechanism. This Corynebacterium jeikeium (strain K411) protein is Biotin synthase.